Consider the following 58-residue polypeptide: Small ribosomal subunit protein bS21 (58 aa).

Residues 39–58 are disordered; the sequence is DKPSVKKRAKSKAAAKYRSR. A compositionally biased stretch (basic residues) spans 43-58; the sequence is VKKRAKSKAAAKYRSR.

It belongs to the bacterial ribosomal protein bS21 family.

This is Small ribosomal subunit protein bS21 from Chlamydia abortus (strain DSM 27085 / S26/3) (Chlamydophila abortus).